A 183-amino-acid polypeptide reads, in one-letter code: Streptavidin-V1 (183 aa).

A signal peptide spans 1–24 (MRKIVVAAIAVSLTTVSITASASA). Positions 37–159 (AEAGITGTWY…GHDTFTKVKP (123 aa)) constitute an Avidin-like domain. Residues Y67 and Y78 each contribute to the biotin site. A Cell attachment site; atypical motif is present at residues 83-85 (RYD). Residues W116, W132, and W144 each coordinate biotin.

It belongs to the avidin/streptavidin family. As to quaternary structure, homotetramer.

The protein resides in the secreted. Functionally, the biological function of streptavidin is not known. Forms a strong non-covalent specific complex with biotin (one molecule of biotin per subunit of streptavidin). The chain is Streptavidin-V1 from Streptomyces violaceus (Streptomyces venezuelae).